We begin with the raw amino-acid sequence, 511 residues long: Bifunctional purine biosynthesis protein PurH (511 aa).

The MGS-like domain maps to 1–146 (MTKRALVSVS…KNHADVTVVV (146 aa)).

This sequence belongs to the PurH family.

It carries out the reaction (6R)-10-formyltetrahydrofolate + 5-amino-1-(5-phospho-beta-D-ribosyl)imidazole-4-carboxamide = 5-formamido-1-(5-phospho-D-ribosyl)imidazole-4-carboxamide + (6S)-5,6,7,8-tetrahydrofolate. The enzyme catalyses IMP + H2O = 5-formamido-1-(5-phospho-D-ribosyl)imidazole-4-carboxamide. The protein operates within purine metabolism; IMP biosynthesis via de novo pathway; 5-formamido-1-(5-phospho-D-ribosyl)imidazole-4-carboxamide from 5-amino-1-(5-phospho-D-ribosyl)imidazole-4-carboxamide (10-formyl THF route): step 1/1. Its pathway is purine metabolism; IMP biosynthesis via de novo pathway; IMP from 5-formamido-1-(5-phospho-D-ribosyl)imidazole-4-carboxamide: step 1/1. This Shouchella clausii (strain KSM-K16) (Alkalihalobacillus clausii) protein is Bifunctional purine biosynthesis protein PurH.